Reading from the N-terminus, the 370-residue chain is Luciferin sulfotransferase (370 aa).

90-95 (KAGTTW) serves as a coordination point for 3'-phosphoadenylyl sulfate. H165 (proton acceptor) is an active-site residue. Residues R189, S197, Y250, 284–289 (LSFESM), and 316–320 (FMRSG) contribute to the 3'-phosphoadenylyl sulfate site.

This sequence belongs to the sulfotransferase 1 family.

It carries out the reaction firefly D-luciferin + 3'-phosphoadenylyl sulfate = firefly D-sulfoluciferin + adenosine 3',5'-bisphosphate + H(+). The enzyme catalyses firefly L-luciferin + 3'-phosphoadenylyl sulfate = firefly L-sulfoluciferin + adenosine 3',5'-bisphosphate + H(+). Its activity is regulated as follows. Sulfoluciferin formation is inhibited by the product adenosine 3',5'-bisphosphate. Catalyzes the production of firefly sulfoluciferin from luciferin using the sulfo-donor 3'-phosphoadenylyl sulfate (PAPS). Is also able to catalyze the reverse reaction, i.e. the adenosine 3',5'-bisphosphate-dependent desulfonation of sulfoluciferin. Can use either D- or L-luciferin stereoisomer as substrate. Sulfoluciferin, which is not a substrate of P.pyralis luciferase, likely serves as a luciferin storage form in fireflies. The sequence is that of Luciferin sulfotransferase from Photinus pyralis (Common eastern firefly).